A 137-amino-acid chain; its full sequence is Putative protein YjhV (137 aa).

The segment covering 1-16 has biased composition (polar residues); it reads MVGYHQTNQKTDTGKT. Residues 1–20 are disordered; it reads MVGYHQTNQKTDTGKTLTRR.

The chain is Putative protein YjhV (yjhV) from Escherichia coli (strain K12).